Reading from the N-terminus, the 215-residue chain is 3,4-dihydroxy-2-butanone 4-phosphate synthase (215 aa).

D-ribulose 5-phosphate-binding positions include 37-38 (RE), Asp42, 150-154 (RRGHT), and Glu175. Residue Glu38 participates in Mg(2+) binding. His153 lines the Mg(2+) pocket.

The protein belongs to the DHBP synthase family. Homodimer. Mg(2+) serves as cofactor. Mn(2+) is required as a cofactor.

The catalysed reaction is D-ribulose 5-phosphate = (2S)-2-hydroxy-3-oxobutyl phosphate + formate + H(+). It functions in the pathway cofactor biosynthesis; riboflavin biosynthesis; 2-hydroxy-3-oxobutyl phosphate from D-ribulose 5-phosphate: step 1/1. Functionally, catalyzes the conversion of D-ribulose 5-phosphate to formate and 3,4-dihydroxy-2-butanone 4-phosphate. The protein is 3,4-dihydroxy-2-butanone 4-phosphate synthase of Desulfatibacillum aliphaticivorans.